A 435-amino-acid polypeptide reads, in one-letter code: AP-2 complex subunit mu (435 aa).

Serine 45 carries the post-translational modification Phosphoserine. Threonine 156 is subject to Phosphothreonine. Residues 170 to 434 enclose the MHD domain; the sequence is RNELFLDVLE…IGRSGIYETR (265 aa). 3 residues coordinate a 1,2-diacyl-sn-glycero-3-phospho-(1D-myo-inositol-3,4,5-trisphosphate): lysine 341, lysine 345, and lysine 354.

Belongs to the adaptor complexes medium subunit family. Adaptor protein complex 2 (AP-2) is a heterotetramer composed of two large adaptins (alpha-type subunit AP2A1 or AP2A2 and beta-type subunit AP2B1), a medium adaptin (mu-type subunit AP2M1) and a small adaptin (sigma-type subunit AP2S1). Interacts with ATP6V1H and MEGF10. Interacts with EGFR and TTGN1. Interacts with F2R. Interacts with PIP5K1C; tyrosine phosphorylation of PIP5K1C weakens the interaction. Interacts with KIAA0319; required for clathrin-mediated endocytosis of KIAA0319. Interacts with DVL2 (via DEP domain). Interacts with KCNQ1; mediates estrogen-induced internalization via clathrin-coated vesicles. Interacts with P2RX4 (via internalization motif). Together with AP2A1 or AP2A2 and AP2B1, it interacts with ADAM10; this interaction facilitates ADAM10 endocytosis from the plasma membrane during long-term potentiation in hippocampal neurons. Probably interacts with ACE2 (via endocytic sorting signal motif); the interaction is inhibited by ACE2 phosphorylation. Interacts with RALBP1; the interaction is direct. Interacts with TMEM106B (via N-terminus). Post-translationally, phosphorylation at Thr-156 increases the affinity of the AP-2 complex for cargo membrane proteins during the initial stages of endocytosis.

Its subcellular location is the cell membrane. It is found in the membrane. The protein localises to the coated pit. In terms of biological role, component of the adaptor protein complex 2 (AP-2). Adaptor protein complexes function in protein transport via transport vesicles in different membrane traffic pathways. Adaptor protein complexes are vesicle coat components and appear to be involved in cargo selection and vesicle formation. AP-2 is involved in clathrin-dependent endocytosis in which cargo proteins are incorporated into vesicles surrounded by clathrin (clathrin-coated vesicles, CCVs) which are destined for fusion with the early endosome. The clathrin lattice serves as a mechanical scaffold but is itself unable to bind directly to membrane components. Clathrin-associated adaptor protein (AP) complexes which can bind directly to both the clathrin lattice and to the lipid and protein components of membranes are considered to be the major clathrin adaptors contributing the CCV formation. AP-2 also serves as a cargo receptor to selectively sort the membrane proteins involved in receptor-mediated endocytosis. AP-2 seems to play a role in the recycling of synaptic vesicle membranes from the presynaptic surface. AP-2 recognizes Y-X-X-[FILMV] (Y-X-X-Phi) and [ED]-X-X-X-L-[LI] endocytosis signal motifs within the cytosolic tails of transmembrane cargo molecules. AP-2 may also play a role in maintaining normal post-endocytic trafficking through the ARF6-regulated, non-clathrin pathway. During long-term potentiation in hippocampal neurons, AP-2 is responsible for the endocytosis of ADAM10. The AP-2 mu subunit binds to transmembrane cargo proteins; it recognizes the Y-X-X-Phi motifs. The surface region interacting with to the Y-X-X-Phi motif is inaccessible in cytosolic AP-2, but becomes accessible through a conformational change following phosphorylation of AP-2 mu subunit at Thr-156 in membrane-associated AP-2. The membrane-specific phosphorylation event appears to involve assembled clathrin which activates the AP-2 mu kinase AAK1. Plays a role in endocytosis of frizzled family members upon Wnt signaling. The chain is AP-2 complex subunit mu (AP2M1) from Bos taurus (Bovine).